A 264-amino-acid polypeptide reads, in one-letter code: Thiazole synthase (264 aa).

Residue K104 is the Schiff-base intermediate with DXP of the active site. 1-deoxy-D-xylulose 5-phosphate contacts are provided by residues G165, 191 to 192 (AG), and 213 to 214 (NT).

The protein belongs to the ThiG family. Homotetramer. Forms heterodimers with either ThiH or ThiS.

Its subcellular location is the cytoplasm. The catalysed reaction is [ThiS sulfur-carrier protein]-C-terminal-Gly-aminoethanethioate + 2-iminoacetate + 1-deoxy-D-xylulose 5-phosphate = [ThiS sulfur-carrier protein]-C-terminal Gly-Gly + 2-[(2R,5Z)-2-carboxy-4-methylthiazol-5(2H)-ylidene]ethyl phosphate + 2 H2O + H(+). The protein operates within cofactor biosynthesis; thiamine diphosphate biosynthesis. Functionally, catalyzes the rearrangement of 1-deoxy-D-xylulose 5-phosphate (DXP) to produce the thiazole phosphate moiety of thiamine. Sulfur is provided by the thiocarboxylate moiety of the carrier protein ThiS. In vitro, sulfur can be provided by H(2)S. The chain is Thiazole synthase from Oleidesulfovibrio alaskensis (strain ATCC BAA-1058 / DSM 17464 / G20) (Desulfovibrio alaskensis).